A 506-amino-acid chain; its full sequence is Notoamide biosynthesis cluster transcriptional coactivator notQ' (506 aa).

Residues 11–38 (CLVCRHRKVACDRGRPQCGLCRKNGFDC) constitute a DNA-binding region (zn(2)-C6 fungal-type). Residues 73–102 (GRLSQSQPSQPATERDDLATTPSTGRLAPP) are disordered. Residues 75 to 84 (LSQSQPSQPA) show a composition bias toward polar residues.

Its subcellular location is the nucleus. Transcription factor that probably regulates the expression of the gene cluster that mediates the biosynthesis of notoamide, a fungal indole alkaloid that belongs to a family of natural products containing a characteristic bicyclo[2.2.2]diazaoctane core. In Aspergillus versicolor, this protein is Notoamide biosynthesis cluster transcriptional coactivator notQ'.